Consider the following 391-residue polypeptide: Response regulator aspartate phosphatase I (391 aa).

TPR repeat units follow at residues 62-95, 150-183, 184-217, 224-257, 275-311, and 338-371; these read LEFR…EKQG, SYVY…AVQT, VRCQ…SKES, AMSH…FEKS, KQQN…LEGL, and ENFS…RRKI.

Belongs to the Rap family.

Its subcellular location is the cytoplasm. With respect to regulation, inhibited by PhrI. Activates ICEBs1 gene expression, excision and transfer by inactivating the ICEBs1 repressor protein ImmR. RapI-mediated induction likely results from an increase in the specific activity of the protease ImmA, which mediates proteolysis of ImmR. In addition, is involved in regulation of sporulation. Acts as a phosphatase that specifically dephosphorylates the sporulation initiation phosphotransferase Spo0F and inhibits its activity. The sequence is that of Response regulator aspartate phosphatase I (rapI) from Bacillus subtilis (strain 168).